The sequence spans 104 residues: MTAPTKMTFFSRFEADILAGKKTITIRDESEKDYQPGTTVEVSTLEEGRVFCQLKILSVEPIAFSALNEFHAEQENMTLETLKEVIQEIYPGIEQLYVIQYQRV.

The ASCH domain maps to 7 to 93 (MTFFSRFEAD…EVIQEIYPGI (87 aa)). Lys-22 (proton acceptor) is an active-site residue. Thr-25 functions as the Nucleophile in the catalytic mechanism. The active-site Proton donor is Glu-75.

The protein belongs to the N(4)-acetylcytidine amidohydrolase family.

The enzyme catalyses N(4)-acetylcytidine + H2O = cytidine + acetate + H(+). It carries out the reaction N(4)-acetyl-2'-deoxycytidine + H2O = 2'-deoxycytidine + acetate + H(+). It catalyses the reaction N(4)-acetylcytosine + H2O = cytosine + acetate + H(+). In terms of biological role, catalyzes the hydrolysis of N(4)-acetylcytidine (ac4C). This is N(4)-acetylcytidine amidohydrolase from Vibrio vulnificus (strain CMCP6).